The following is a 120-amino-acid chain: Spermidine export protein MdtJ (120 aa).

Helical transmembrane passes span 1-21, 31-51, 54-74, and 81-101; these read MFYWILLALAIATEITGTLSM, AGFILMLVMITLSYIFLSFAV, IALGVAYALWEGIGILFITIF, and EALSTMKIAGLLTLVAGIVLI.

This sequence belongs to the drug/metabolite transporter (DMT) superfamily. Small multidrug resistance (SMR) (TC 2.A.7.1) family. MdtJ subfamily. In terms of assembly, forms a complex with MdtI.

The protein resides in the cell inner membrane. Functionally, catalyzes the excretion of spermidine. The polypeptide is Spermidine export protein MdtJ (Salmonella agona (strain SL483)).